The primary structure comprises 227 residues: Floral homeotic protein DEFICIENS (227 aa).

Positions 3–57 (RGKIQIKRIENQTNRQVTYSKRRNGLFKKAHELSVLCDAKVSIIMISSTQKLHEY) constitute an MADS-box domain. The K-box domain occupies 84-174 (YEKMQEHLKK…VLEFDARRED (91 aa)).

The protein localises to the nucleus. Transcription factor involved in the genetic control of flower development. Acts in conjunction with GLOBOSA (glo). This chain is Floral homeotic protein DEFICIENS (DEFA), found in Antirrhinum majus (Garden snapdragon).